A 1019-amino-acid chain; its full sequence is Probable inorganic carbon transporter subunit DabA 1 (1019 aa).

Zn(2+) contacts are provided by C491 and D493. The interval V624–Q643 is disordered. Residues H676 and C691 each coordinate Zn(2+).

It belongs to the inorganic carbon transporter (TC 9.A.2) DabA family. Forms a complex with DabB. It depends on Zn(2+) as a cofactor.

The protein localises to the cell inner membrane. Functionally, part of an energy-coupled inorganic carbon pump. The polypeptide is Probable inorganic carbon transporter subunit DabA 1 (Sorangium cellulosum (strain So ce56) (Polyangium cellulosum (strain So ce56))).